The chain runs to 324 residues: MGDTIKELLNPTVLSALLMGFAFSMVLGPIFIPMLHKLKFGQNIRKDGPQSHLKKSGTPTMGGLIFFISVTVTMLIIGYKPTDEGMVVLYSLIAFGIIGFLDDILKIIHRDNLGLRAYQKMILLLLFSIALAYYGYTNIGTDIIIPFMNSKLNLGIFYIPLVVVYYAATTNAVNLTDGIDGLASSVTVIVLTFFAIVGFKTGHYQVGVFSIALAGALLGFLRYNAFPAKIFMGDTGSLALGGAIATIALILKMPLFIIIVGGIYVVETLSVIIQVTSFKTTGKRVFKMAPIHHHFEQCGWSEVKLVTVFSIITLILCIIGFIAL.

9 helical membrane passes run 13–33 (VLSA…IFIP), 59–79 (PTMG…IIGY), 85–105 (GMVV…DDIL), 121–141 (MILL…NIGT), 143–163 (IIIP…PLVV), 179–199 (IDGL…IVGF), 201–221 (TGHY…LGFL), 243–263 (AIAT…VGGI), and 303–323 (VKLV…GFIA).

The protein belongs to the glycosyltransferase 4 family. MraY subfamily. Requires Mg(2+) as cofactor.

It is found in the cell membrane. It carries out the reaction UDP-N-acetyl-alpha-D-muramoyl-L-alanyl-gamma-D-glutamyl-meso-2,6-diaminopimeloyl-D-alanyl-D-alanine + di-trans,octa-cis-undecaprenyl phosphate = di-trans,octa-cis-undecaprenyl diphospho-N-acetyl-alpha-D-muramoyl-L-alanyl-D-glutamyl-meso-2,6-diaminopimeloyl-D-alanyl-D-alanine + UMP. Its pathway is cell wall biogenesis; peptidoglycan biosynthesis. Its function is as follows. Catalyzes the initial step of the lipid cycle reactions in the biosynthesis of the cell wall peptidoglycan: transfers peptidoglycan precursor phospho-MurNAc-pentapeptide from UDP-MurNAc-pentapeptide onto the lipid carrier undecaprenyl phosphate, yielding undecaprenyl-pyrophosphoryl-MurNAc-pentapeptide, known as lipid I. This chain is Phospho-N-acetylmuramoyl-pentapeptide-transferase, found in Clostridium botulinum (strain Alaska E43 / Type E3).